The primary structure comprises 135 residues: Galectin-1 (135 aa).

N-acetylalanine is present on alanine 2. One can recognise a Galectin domain in the interval 4-135 (GLVASNLNLK…DFKIKCVAFE (132 aa)). An N6-acetyllysine mark is found at lysine 13, lysine 19, and lysine 29. Serine 30 carries the phosphoserine modification. Residues 45 to 49 (HFNPR), histidine 53, asparagine 62, and 69 to 72 (WGTE) each bind a beta-D-galactoside. Lysine 108 carries the N6-acetyllysine; alternate modification. Residue lysine 108 is modified to N6-succinyllysine; alternate. Lysine 128 is modified (N6-acetyllysine).

Homodimer. Binds LGALS3BP. Interacts with CD2, CD3, CD4, CD6, CD7, CD43, ALCAM and CD45. Interacts with laminin (via poly-N-acetyllactosamine). Interacts with SUSD2. Interacts with cargo receptor TMED10; the interaction mediates the translocation from the cytoplasm into the ERGIC (endoplasmic reticulum-Golgi intermediate compartment) and thereby secretion. Interacts with CD69.

Its subcellular location is the secreted. It localises to the extracellular space. The protein localises to the extracellular matrix. The protein resides in the cytoplasm. Its function is as follows. Lectin that binds beta-galactoside and a wide array of complex carbohydrates. Plays a role in regulating apoptosis, cell proliferation and cell differentiation. Inhibits CD45 protein phosphatase activity and therefore the dephosphorylation of Lyn kinase. Strong inducer of T-cell apoptosis. Plays a negative role in Th17 cell differentiation via activation of the receptor CD69. This chain is Galectin-1 (Lgals1), found in Mus musculus (Mouse).